Reading from the N-terminus, the 192-residue chain is Ion-translocating oxidoreductase complex subunit A (192 aa).

A run of 6 helical transmembrane segments spans residues 5-25 (LLLL…FLGL), 39-59 (IGMS…SYLV), 65-85 (LPFD…AVVV), 102-122 (ALGI…VALL), 134-154 (AIFG…FSAM), and 171-191 (AIAM…TGLV).

It belongs to the NqrDE/RnfAE family. The complex is composed of six subunits: RnfA, RnfB, RnfC, RnfD, RnfE and RnfG.

It is found in the cell inner membrane. Part of a membrane-bound complex that couples electron transfer with translocation of ions across the membrane. This Shewanella piezotolerans (strain WP3 / JCM 13877) protein is Ion-translocating oxidoreductase complex subunit A.